Consider the following 244-residue polypeptide: Type I iodothyronine deiodinase (244 aa).

At 1 to 12 the chain is on the extracellular side; it reads MGLSQLGLWLRR. The helical; Signal-anchor for type III membrane protein transmembrane segment at 13–33 threads the bilayer; sequence LWVLFQVALQVAVGKVFLILF. Residues 34–244 are Cytoplasmic-facing; sequence PSRVKQHIVA…VRAVLEKLHS (211 aa). Sec-121 is a catalytic residue. Residue Sec-121 is a non-standard amino acid, selenocysteine.

Belongs to the iodothyronine deiodinase family. In terms of assembly, predominantly monomer. Can form homodimers but homodimerization is not essential for enzyme activity.

The protein resides in the cell membrane. Its subcellular location is the endoplasmic reticulum membrane. It is found in the basolateral cell membrane. It carries out the reaction 3,3',5-triiodo-L-thyronine + iodide + A + H(+) = L-thyroxine + AH2. It catalyses the reaction 3,3',5'-triiodo-L-thyronine + iodide + A + H(+) = L-thyroxine + AH2. The enzyme catalyses 3,3'-diiodo-L-thyronine + iodide + A + H(+) = 3,3',5'-triiodo-L-thyronine + AH2. The catalysed reaction is 3,3'-diiodo-L-thyronine + iodide + A + H(+) = 3,3',5-triiodo-L-thyronine + AH2. It carries out the reaction 3'-iodo-L-thyronine + iodide + A + H(+) = 3',5'-diiodo-L-thyronine + AH2. It catalyses the reaction 3-iodo-L-thyronine + iodide + A + H(+) = 3,5-diiodo-L-thyronine + AH2. The enzyme catalyses 3-iodo-L-thyronine + iodide + A + H(+) = 3,3'-diiodo-L-thyronine + AH2. The catalysed reaction is 3,3'-diiodothyronamine + iodide + A + H(+) = 3,3',5'-triiodothyronamine + AH2. It carries out the reaction 3'-iodothyronamine + iodide + A + H(+) = 3',5'-diiodothyronamine + AH2. It catalyses the reaction 3-iodothyronamine + iodide + A + H(+) = 3,3'-diiodothyronamine + AH2. The enzyme catalyses 3,3'-diiodothyronamine + iodide + A + H(+) = 3,3',5-triiodothyronamine + AH2. The catalysed reaction is 3-iodothyronamine + iodide + A + H(+) = 3,5-diiodothyronamine + AH2. It carries out the reaction 3,3'-diiodo-L-thyronine sulfate + iodide + A + H(+) = 3,3',5'-triiodo-L-thyronine sulfate + AH2. It catalyses the reaction 3,3',5'-triiodo-L-thyronine sulfate + iodide + A + H(+) = L-thyroxine sulfate + AH2. The enzyme catalyses 3,3'-diiodo-L-thyronine sulfate + iodide + A + H(+) = 3,3',5-triiodo-L-thyronine sulfate + AH2. Its function is as follows. Plays a crucial role in the metabolism of thyroid hormones (TH) and has specific roles in TH activation and inactivation by deiodination. Catalyzes the deiodination of L-thyroxine (T4) to 3,5,3'-triiodothyronine (T3) and 3',5'-diiodothyronine (3',5'-T2) to 3'-monoiodothyronine (3'-T1) via outer-ring deiodination (ORD). Catalyzes the deiodination of T4 to 3,3',5'-triiodothyronine (rT3), T3 to 3,3'-diiodothyronine (3,3'-T2), 3,5-diiodothyronine (3,5-T2) to 3-monoiodothyronine (3-T1) and 3,3'-T2 to 3-T1 via inner-ring deiodination (IRD). Catalyzes the deiodination of rT3 to 3,3'-T2 via ORD. Catalyzes the phenolic ring deiodinations of 3,3',5'-triiodothyronamine, 3',5'-diiodothyronamine and 3,3'-diiodothyronamine as well as tyrosyl ring deiodinations of 3,5,3'-triiodothyronamine and 3,5-diiodothyronamine. Catalyzes the deiodination of L-thyroxine sulfate and 3,3',5-triiodo-L-thyronine sulfate via IRD and of 3,3',5'-triiodo-L-thyronine sulfate via ORD. This Felis catus (Cat) protein is Type I iodothyronine deiodinase (DIO1).